The chain runs to 510 residues: MKTTAAMLWEKLRDGSVEQRAIEFAKTTLPYLMVDPMSGSRGVVEHDFQSAGALLVNNLAAKLARSLFPTGIPFFRSELTDAIRREADSRDTDITEVTAALARVDRKATQRLFQNASLAVLTQVIKLLIVTGNALLYRDSDAATVVAWSLRSYAVRRDATGRWMDIVLKQRYKSKDLDEEYKQDLMRAGRNLSGSGSVDLYTHVQRKKGTAMEYAELYHEIDGVRVGKEGRWPIHLCPYIVPTWNLAPGEHYGRGHVEDYIGDFAKLSLLSEKLGLYELESLEVLNLVDEAKGAVVDDYQDAEMGDYVPGGAEAVRAYERGDYNKMAAIQQSLQAVVVRLNQAFMYGANQRDAERVTAEEVRITAEEAENTLGGTYSLLAENLQSPLAYVCLSEVDDALLQGLITKQHKPAIETGLPALSRSAAVQSMLNASQVIAGLAPIAQLDPRISLPKMMDTIWAAFSVDTSQFYKSADELQAEAEQQRQQAAQAQAAQETLLEGASDMTNALAGV.

It belongs to the podoviridae head-to-tail connector protein family. Homododecamer.

The protein resides in the virion. In terms of biological role, forms the portal vertex of the capsid. This portal plays critical roles in head assembly, genome packaging, neck/tail attachment, and genome ejection. The portal protein multimerizes as a single ring-shaped homododecamer arranged around a central channel. The polypeptide is Portal protein (Pseudomonas phage phiKMV).